A 288-amino-acid chain; its full sequence is Bifunctional protein FolD (288 aa).

NADP(+) contacts are provided by residues 166–168 (GAS) and Ile232.

Belongs to the tetrahydrofolate dehydrogenase/cyclohydrolase family. Homodimer.

The catalysed reaction is (6R)-5,10-methylene-5,6,7,8-tetrahydrofolate + NADP(+) = (6R)-5,10-methenyltetrahydrofolate + NADPH. It carries out the reaction (6R)-5,10-methenyltetrahydrofolate + H2O = (6R)-10-formyltetrahydrofolate + H(+). It participates in one-carbon metabolism; tetrahydrofolate interconversion. Catalyzes the oxidation of 5,10-methylenetetrahydrofolate to 5,10-methenyltetrahydrofolate and then the hydrolysis of 5,10-methenyltetrahydrofolate to 10-formyltetrahydrofolate. This chain is Bifunctional protein FolD, found in Citrobacter koseri (strain ATCC BAA-895 / CDC 4225-83 / SGSC4696).